We begin with the raw amino-acid sequence, 426 residues long: Glutamate-1-semialdehyde 2,1-aminomutase (426 aa).

The residue at position 265 (K265) is an N6-(pyridoxal phosphate)lysine.

Belongs to the class-III pyridoxal-phosphate-dependent aminotransferase family. HemL subfamily. As to quaternary structure, homodimer. Pyridoxal 5'-phosphate serves as cofactor.

It localises to the cytoplasm. It catalyses the reaction (S)-4-amino-5-oxopentanoate = 5-aminolevulinate. It participates in porphyrin-containing compound metabolism; protoporphyrin-IX biosynthesis; 5-aminolevulinate from L-glutamyl-tRNA(Glu): step 2/2. In Pectobacterium atrosepticum (strain SCRI 1043 / ATCC BAA-672) (Erwinia carotovora subsp. atroseptica), this protein is Glutamate-1-semialdehyde 2,1-aminomutase.